A 246-amino-acid polypeptide reads, in one-letter code: 3-deoxy-manno-octulosonate cytidylyltransferase (246 aa).

This sequence belongs to the KdsB family.

It is found in the cytoplasm. It catalyses the reaction 3-deoxy-alpha-D-manno-oct-2-ulosonate + CTP = CMP-3-deoxy-beta-D-manno-octulosonate + diphosphate. It participates in nucleotide-sugar biosynthesis; CMP-3-deoxy-D-manno-octulosonate biosynthesis; CMP-3-deoxy-D-manno-octulosonate from 3-deoxy-D-manno-octulosonate and CTP: step 1/1. Its pathway is bacterial outer membrane biogenesis; lipopolysaccharide biosynthesis. In terms of biological role, activates KDO (a required 8-carbon sugar) for incorporation into bacterial lipopolysaccharide in Gram-negative bacteria. The chain is 3-deoxy-manno-octulosonate cytidylyltransferase from Bradyrhizobium sp. (strain BTAi1 / ATCC BAA-1182).